Consider the following 125-residue polypeptide: Small ribosomal subunit protein bS6m (125 aa).

It belongs to the bacterial ribosomal protein bS6 family. In terms of assembly, component of the mitochondrial small ribosomal subunit (mt-SSU). Mature mammalian 55S mitochondrial ribosomes consist of a small (28S) and a large (39S) subunit. The 28S small subunit contains a 12S ribosomal RNA (12S mt-rRNA) and 30 different proteins. The 39S large subunit contains a 16S rRNA (16S mt-rRNA), a copy of mitochondrial valine transfer RNA (mt-tRNA(Val)), which plays an integral structural role, and 52 different proteins.

Its subcellular location is the mitochondrion. This is Small ribosomal subunit protein bS6m (MRPS6) from Homo sapiens (Human).